We begin with the raw amino-acid sequence, 77 residues long: Pi/alpha-stichotoxin-Hmg5b (77 aa).

Residues 1–21 (MDYQRLLFLFAVAMVITTTVA) form the signal peptide. The propeptide occupies 22-34 (LPKDTALMDGQLQ). 3 disulfides stabilise this stretch: Cys40-Cys73, Cys42-Cys66, and Cys56-Cys74. Position 52 is a methionine sulfoxide; partial (Met52).

The protein belongs to the sea anemone type 3 (BDS) potassium channel toxin family. Post-translationally, toxin occurs in two forms in the mucus, Hmg 1b-2 which is not oxidized and Hmg 1b-2 MetOx which is oxidized at Met-52.

Its subcellular location is the secreted. It localises to the nematocyst. In terms of biological role, the non-oxidized toxin is remarkably non-selective with activity on many different ion channels. Weakly and reversibly inhibits rat and human homomeric ASIC1 (isoform ASIC1a) (IC(50)=4.8 uM, and IC(50)=14.6 uM), and ASIC3 (IC(50)=15.9 uM). Molecular modeling interaction with ASIC1a suggests that this peptide hinders the collapse of acidic pockets and stabilizes nonconducting channels state. It activates several potassium channels including Kv1.1/KCNA1, Kv1.2/KCNA2, and drosophila Shaker IR. It moderately to potently inhibits potassium channels including Kv1.3/KCNA3, Kv1.4/KCNA4, Kv1.5/KCNA5, Kv1.6/KCNA6, Kv2.1/KCNB1, Kv4.2/KCND2, Kv7.1/KCNQ1, Kv7.2/Kv7.3 (KCNQ2/KCNQ3), Kv7.4/KCNQ4, hERG/KCNH2, and C.elegans QKT1. On sodium channels, it moderately to potently inhibits Nav1.1/SCN1A, Nav1.2/SCN2A, Nav1.3/SCN3A, Nav1.4/SCN4A, Nav1.5/SCN5A, Nav1.6/SCN8A, Nav1.7/SCN9A, Nav1.8/SCN10A, and B.germanica BgNav. It also moderately to potently inhibits Cav3.1/CACNA1G, Cav3.2/CACNA1H, and Cav3.3/CACNA1I. Significant shifts in the voltage-current relationship are observed on Kv and Nav, depending on the channel isoform, whereas the toxin does not seem to modulate the voltage-sensor domains of Cav channels, acting mainly as a pore blocker. Does not activate nicotinic acetylcholine receptors (nAChR), but potentiates ACh-elicited current of human alpha-7/CHRNA7 nAChR. Is also able to bind T.californica muscle-type nAChRs. In vivo, causes an excitatory effect in mice behavior. Also shows antihyperalgesic and analgesic activity in the acid-induced muscle pain mice model, and weak anti-inflammatory effect in models of acute local inflammation. Functionally, forms an oxidized toxin derivative (Hmg 1b-2 MetOx). Able to bind T.californica muscle-type nAChRs (alpha-1-beta-1-delta-epsilon (CHRNA1-CHRNB1-CHRND-CHRNE)). This chain is Pi/alpha-stichotoxin-Hmg5b, found in Heteractis magnifica (Magnificent sea anemone).